The chain runs to 436 residues: Bifunctional protein GlmU (436 aa).

The tract at residues 1–225 (MNNNTSIIIL…EQNFMGINDK (225 aa)) is pyrophosphorylase. Residues 10–13 (LAAG), lysine 24, glutamine 76, and 83–84 (GT) each bind UDP-N-acetyl-alpha-D-glucosamine. Aspartate 104 contacts Mg(2+). UDP-N-acetyl-alpha-D-glucosamine-binding residues include glycine 137, glutamate 151, asparagine 166, and asparagine 223. Asparagine 223 provides a ligand contact to Mg(2+). Residues 226 to 246 (FQLSIAEKIMQDEIKQNLMKA) are linker. Positions 247 to 436 (GVLMRMPESI…KFFGKDDVKK (190 aa)) are N-acetyltransferase. Residues arginine 310 and lysine 327 each coordinate UDP-N-acetyl-alpha-D-glucosamine. Histidine 338 serves as the catalytic Proton acceptor. 2 residues coordinate UDP-N-acetyl-alpha-D-glucosamine: tyrosine 341 and asparagine 352. Acetyl-CoA contacts are provided by residues 361–362 (NY), serine 380, alanine 398, and arginine 415.

In the N-terminal section; belongs to the N-acetylglucosamine-1-phosphate uridyltransferase family. This sequence in the C-terminal section; belongs to the transferase hexapeptide repeat family. In terms of assembly, homotrimer. The cofactor is Mg(2+).

The protein localises to the cytoplasm. It carries out the reaction alpha-D-glucosamine 1-phosphate + acetyl-CoA = N-acetyl-alpha-D-glucosamine 1-phosphate + CoA + H(+). The catalysed reaction is N-acetyl-alpha-D-glucosamine 1-phosphate + UTP + H(+) = UDP-N-acetyl-alpha-D-glucosamine + diphosphate. The protein operates within nucleotide-sugar biosynthesis; UDP-N-acetyl-alpha-D-glucosamine biosynthesis; N-acetyl-alpha-D-glucosamine 1-phosphate from alpha-D-glucosamine 6-phosphate (route II): step 2/2. It participates in nucleotide-sugar biosynthesis; UDP-N-acetyl-alpha-D-glucosamine biosynthesis; UDP-N-acetyl-alpha-D-glucosamine from N-acetyl-alpha-D-glucosamine 1-phosphate: step 1/1. Its pathway is bacterial outer membrane biogenesis; LPS lipid A biosynthesis. In terms of biological role, catalyzes the last two sequential reactions in the de novo biosynthetic pathway for UDP-N-acetylglucosamine (UDP-GlcNAc). The C-terminal domain catalyzes the transfer of acetyl group from acetyl coenzyme A to glucosamine-1-phosphate (GlcN-1-P) to produce N-acetylglucosamine-1-phosphate (GlcNAc-1-P), which is converted into UDP-GlcNAc by the transfer of uridine 5-monophosphate (from uridine 5-triphosphate), a reaction catalyzed by the N-terminal domain. This Campylobacter concisus (strain 13826) protein is Bifunctional protein GlmU.